Reading from the N-terminus, the 122-residue chain is Large ribosomal subunit protein bL12 (122 aa).

The protein belongs to the bacterial ribosomal protein bL12 family. In terms of assembly, homodimer. Part of the ribosomal stalk of the 50S ribosomal subunit. Forms a multimeric L10(L12)X complex, where L10 forms an elongated spine to which 2 to 4 L12 dimers bind in a sequential fashion. Binds GTP-bound translation factors.

Its function is as follows. Forms part of the ribosomal stalk which helps the ribosome interact with GTP-bound translation factors. Is thus essential for accurate translation. In Fusobacterium nucleatum subsp. nucleatum (strain ATCC 25586 / DSM 15643 / BCRC 10681 / CIP 101130 / JCM 8532 / KCTC 2640 / LMG 13131 / VPI 4355), this protein is Large ribosomal subunit protein bL12.